Consider the following 126-residue polypeptide: Glycine cleavage system H protein (126 aa).

In terms of domain architecture, Lipoyl-binding spans 22-104 (VATIGITEYA…YEKAWMVKIE (83 aa)). At K63 the chain carries N6-lipoyllysine.

It belongs to the GcvH family. The glycine cleavage system is composed of four proteins: P, T, L and H. (R)-lipoate is required as a cofactor.

Its function is as follows. The glycine cleavage system catalyzes the degradation of glycine. The H protein shuttles the methylamine group of glycine from the P protein to the T protein. In terms of biological role, is also involved in protein lipoylation via its role as an octanoyl/lipoyl carrier protein intermediate. The sequence is that of Glycine cleavage system H protein from Staphylococcus epidermidis (strain ATCC 35984 / DSM 28319 / BCRC 17069 / CCUG 31568 / BM 3577 / RP62A).